The chain runs to 106 residues: UPF0145 protein Pfl01_1745 (106 aa).

The protein belongs to the UPF0145 family.

In Pseudomonas fluorescens (strain Pf0-1), this protein is UPF0145 protein Pfl01_1745.